A 92-amino-acid polypeptide reads, in one-letter code: Small ribosomal subunit protein uS19c (92 aa).

Belongs to the universal ribosomal protein uS19 family.

Its subcellular location is the plastid. It localises to the cyanelle. Its function is as follows. Protein S19 forms a complex with S13 that binds strongly to the 16S ribosomal RNA. This Cyanophora paradoxa protein is Small ribosomal subunit protein uS19c (rps19).